The chain runs to 125 residues: Succinate dehydrogenase cytochrome b560 subunit (125 aa).

3 helical membrane-spanning segments follow: residues 29–49 (ISGVAMFTLIASPPLFLKLAT), 68–88 (ILPWFIVIISVIFLYHIINGI), and 104–124 (IIKDSNTLLALVFLIMLFKFI). Histidine 83 is a heme binding site.

This sequence belongs to the cytochrome b560 family. As to quaternary structure, forms part of complex II containing four subunits: a 70 kDa flavoprotein (FP), a 27 kDa iron-sulfur protein (IP), a cytochrome B and a membrane-anchoring protein. Heme is required as a cofactor.

It localises to the mitochondrion inner membrane. It participates in carbohydrate metabolism; tricarboxylic acid cycle. Its function is as follows. Membrane-anchoring subunit of succinate dehydrogenase (SDH) that is involved in complex II of the mitochondrial electron transport chain and is responsible for transferring electrons from succinate to ubiquinone (coenzyme Q). The protein is Succinate dehydrogenase cytochrome b560 subunit (SDH3) of Porphyra purpurea (Red seaweed).